The primary structure comprises 175 residues: Cyclic pyranopterin monophosphate synthase (175 aa).

Substrate-binding positions include L78–H80 and M125–E126. D140 is a catalytic residue.

It belongs to the MoaC family. Homohexamer; trimer of dimers.

The enzyme catalyses (8S)-3',8-cyclo-7,8-dihydroguanosine 5'-triphosphate = cyclic pyranopterin phosphate + diphosphate. It participates in cofactor biosynthesis; molybdopterin biosynthesis. Catalyzes the conversion of (8S)-3',8-cyclo-7,8-dihydroguanosine 5'-triphosphate to cyclic pyranopterin monophosphate (cPMP). This Rhodopirellula baltica (strain DSM 10527 / NCIMB 13988 / SH1) protein is Cyclic pyranopterin monophosphate synthase.